Reading from the N-terminus, the 189-residue chain is MTMISVNEFKNGLTIEYNNDLWRIVEFQHVKPGKGSAFVRSKLKSLRTGAVQEYTFRSTAKVNTADIQTKAMQYLYNDGTSFVFMDTNTYEQLEIPEAQVERESKFLKENMVVNVITHEGETLGVDLPNTVDLEVAETEPNIKGDTSSGGGKPATMETGLVVNVPFFINQGDVLTINTADGTYVSRANK.

This sequence belongs to the elongation factor P family.

Its subcellular location is the cytoplasm. It participates in protein biosynthesis; polypeptide chain elongation. Involved in peptide bond synthesis. Stimulates efficient translation and peptide-bond synthesis on native or reconstituted 70S ribosomes in vitro. Probably functions indirectly by altering the affinity of the ribosome for aminoacyl-tRNA, thus increasing their reactivity as acceptors for peptidyl transferase. This is Elongation factor P 2 (efp2) from Lactobacillus johnsonii (strain CNCM I-12250 / La1 / NCC 533).